The following is a 436-amino-acid chain: tRNA-2-methylthio-N(6)-dimethylallyladenosine synthase (436 aa).

The MTTase N-terminal domain maps to 5 to 121; the sequence is RKLFIKTYGC…LPDMLERTEG (117 aa). [4Fe-4S] cluster-binding residues include cysteine 14, cysteine 50, cysteine 84, cysteine 158, cysteine 162, and cysteine 165. The Radical SAM core domain maps to 144–373; sequence ALRGPTAFLT…LGEQQRAAQA (230 aa). Positions 373–435 constitute a TRAM domain; the sequence is AAMVGRELGV…PNSLAGERIG (63 aa).

This sequence belongs to the methylthiotransferase family. MiaB subfamily. Monomer. [4Fe-4S] cluster serves as cofactor.

It localises to the cytoplasm. It catalyses the reaction N(6)-dimethylallyladenosine(37) in tRNA + (sulfur carrier)-SH + AH2 + 2 S-adenosyl-L-methionine = 2-methylsulfanyl-N(6)-dimethylallyladenosine(37) in tRNA + (sulfur carrier)-H + 5'-deoxyadenosine + L-methionine + A + S-adenosyl-L-homocysteine + 2 H(+). Its function is as follows. Catalyzes the methylthiolation of N6-(dimethylallyl)adenosine (i(6)A), leading to the formation of 2-methylthio-N6-(dimethylallyl)adenosine (ms(2)i(6)A) at position 37 in tRNAs that read codons beginning with uridine. This Cereibacter sphaeroides (strain ATCC 17025 / ATH 2.4.3) (Rhodobacter sphaeroides) protein is tRNA-2-methylthio-N(6)-dimethylallyladenosine synthase.